Here is a 330-residue protein sequence, read N- to C-terminus: Tetraacyldisaccharide 4'-kinase (330 aa).

58 to 65 contacts ATP; that stretch reads TVGGSGKT.

Belongs to the LpxK family.

The enzyme catalyses a lipid A disaccharide + ATP = a lipid IVA + ADP + H(+). It participates in glycolipid biosynthesis; lipid IV(A) biosynthesis; lipid IV(A) from (3R)-3-hydroxytetradecanoyl-[acyl-carrier-protein] and UDP-N-acetyl-alpha-D-glucosamine: step 6/6. Its function is as follows. Transfers the gamma-phosphate of ATP to the 4'-position of a tetraacyldisaccharide 1-phosphate intermediate (termed DS-1-P) to form tetraacyldisaccharide 1,4'-bis-phosphate (lipid IVA). The sequence is that of Tetraacyldisaccharide 4'-kinase from Shewanella pealeana (strain ATCC 700345 / ANG-SQ1).